We begin with the raw amino-acid sequence, 550 residues long: MFCVQCEQTIRTPAGNGCSYAQGMCGKTAETSDLQDLLIAALQGLSAWAVKAREYGIINHDVDNFAPRAFFSTLTNVNFDSPRIVGYARDAIAMREALKAQCLSVDANAHCDNPMADLQLVSDDLGELQRQAAEFTPNKDKAAIGENILGLRLLCLYGLKGAAAYMEHAHVLGQYDNDIYAQYHKIMAWLGTWPADMNALLECAMEIGQMNFKVMSILDAGETTKYGHPTPTQVNVKATEGKCILISGHDLKDLYNLLEQTEGTGVNVYTHGEMLPAHGYPELRKFKHLVGNYGSGWQNQQVEFARFPGPIVMTSNCIIDPTVGSYDDRIWTRSIVGWPGVSHLEGDDFGPVIAQAQQMAGFPYSEIPHLITVGFGRQTLLGAADTLIDLVSREKLRHIFLVGGCDGARGERNYFTDFVTSVPDDCLILTLACGKYRFNKLEFGDIEGLPRLVDAGQCNDAYSAIILAVTLAEKLGCGVNDLPLSLVLSWFEQKAIVILLTLLSLGVKNIVTGPTAPGFFTPDLLAILNEKFGLRSVTTVEEDMKQLLSA.

Residues Cys3, Cys6, Cys18, and Cys25 each coordinate [2Fe-2S] cluster. 8 residues coordinate hybrid [4Fe-2O-2S] cluster: His249, Glu273, Cys317, Cys405, Cys433, Cys458, Glu492, and Lys494. Cys405 carries the cysteine persulfide modification.

Belongs to the HCP family. The cofactor is [2Fe-2S] cluster. It depends on hybrid [4Fe-2O-2S] cluster as a cofactor.

Its subcellular location is the cytoplasm. It catalyses the reaction A + NH4(+) + H2O = hydroxylamine + AH2 + H(+). Functionally, catalyzes the reduction of hydroxylamine to form NH(3) and H(2)O. This Salmonella typhi protein is Hydroxylamine reductase.